Reading from the N-terminus, the 204-residue chain is Thioredoxin-like 4, chloroplastic (204 aa).

The N-terminal 27 residues, 1 to 27 (MSSLLNISHCSYHGYSGLTSRGGINTV), are a transit peptide targeting the chloroplast. The 139-residue stretch at 63–201 (AKSLSQENLV…IDAAILKYTS (139 aa)) folds into the Thioredoxin domain. Active-site nucleophile residues include C119 and C122. C119 and C122 are joined by a disulfide.

It belongs to the thioredoxin family.

It localises to the plastid. The protein resides in the chloroplast. In terms of biological role, probable thiol-disulfide oxidoreductase that may participate in various redox reactions. The sequence is that of Thioredoxin-like 4, chloroplastic from Arabidopsis thaliana (Mouse-ear cress).